We begin with the raw amino-acid sequence, 399 residues long: 4-hydroxy-3-methylbut-2-enyl diphosphate reductase (399 aa).

Residue Cys66 participates in [4Fe-4S] cluster binding. His96 is a (2E)-4-hydroxy-3-methylbut-2-enyl diphosphate binding site. Residue His96 coordinates dimethylallyl diphosphate. His96 is a binding site for isopentenyl diphosphate. [4Fe-4S] cluster is bound at residue Cys157. His185 lines the (2E)-4-hydroxy-3-methylbut-2-enyl diphosphate pocket. His185 serves as a coordination point for dimethylallyl diphosphate. His185 lines the isopentenyl diphosphate pocket. Glu187 functions as the Proton donor in the catalytic mechanism. Thr250 provides a ligand contact to (2E)-4-hydroxy-3-methylbut-2-enyl diphosphate. Position 288 (Cys288) interacts with [4Fe-4S] cluster. (2E)-4-hydroxy-3-methylbut-2-enyl diphosphate is bound by residues Ser317, Ser318, Asn319, and Ser379. Residues Ser317, Ser318, Asn319, and Ser379 each contribute to the dimethylallyl diphosphate site. 4 residues coordinate isopentenyl diphosphate: Ser317, Ser318, Asn319, and Ser379.

It belongs to the IspH family. [4Fe-4S] cluster serves as cofactor.

The enzyme catalyses isopentenyl diphosphate + 2 oxidized [2Fe-2S]-[ferredoxin] + H2O = (2E)-4-hydroxy-3-methylbut-2-enyl diphosphate + 2 reduced [2Fe-2S]-[ferredoxin] + 2 H(+). It carries out the reaction dimethylallyl diphosphate + 2 oxidized [2Fe-2S]-[ferredoxin] + H2O = (2E)-4-hydroxy-3-methylbut-2-enyl diphosphate + 2 reduced [2Fe-2S]-[ferredoxin] + 2 H(+). It participates in isoprenoid biosynthesis; dimethylallyl diphosphate biosynthesis; dimethylallyl diphosphate from (2E)-4-hydroxy-3-methylbutenyl diphosphate: step 1/1. It functions in the pathway isoprenoid biosynthesis; isopentenyl diphosphate biosynthesis via DXP pathway; isopentenyl diphosphate from 1-deoxy-D-xylulose 5-phosphate: step 6/6. In terms of biological role, catalyzes the conversion of 1-hydroxy-2-methyl-2-(E)-butenyl 4-diphosphate (HMBPP) into a mixture of isopentenyl diphosphate (IPP) and dimethylallyl diphosphate (DMAPP). Acts in the terminal step of the DOXP/MEP pathway for isoprenoid precursor biosynthesis. This is 4-hydroxy-3-methylbut-2-enyl diphosphate reductase from Synechococcus sp. (strain WH7803).